A 272-amino-acid chain; its full sequence is Putative pyruvate, phosphate dikinase regulatory protein (272 aa).

An ADP-binding site is contributed by 154-161 (GVSRTSKS).

The protein belongs to the pyruvate, phosphate/water dikinase regulatory protein family. PDRP subfamily.

The catalysed reaction is N(tele)-phospho-L-histidyl/L-threonyl-[pyruvate, phosphate dikinase] + ADP = N(tele)-phospho-L-histidyl/O-phospho-L-threonyl-[pyruvate, phosphate dikinase] + AMP + H(+). It carries out the reaction N(tele)-phospho-L-histidyl/O-phospho-L-threonyl-[pyruvate, phosphate dikinase] + phosphate + H(+) = N(tele)-phospho-L-histidyl/L-threonyl-[pyruvate, phosphate dikinase] + diphosphate. Functionally, bifunctional serine/threonine kinase and phosphorylase involved in the regulation of the pyruvate, phosphate dikinase (PPDK) by catalyzing its phosphorylation/dephosphorylation. This is Putative pyruvate, phosphate dikinase regulatory protein from Wolbachia pipientis subsp. Culex pipiens (strain wPip).